We begin with the raw amino-acid sequence, 55 residues long: MTTDPKMLELLVCPITGGNLSFNRKTQELISLKAKLAYPIRDGVPIMLASEARPL.

Belongs to the UPF0434 family.

In Bartonella bacilliformis (strain ATCC 35685 / KC583 / Herrer 020/F12,63), this protein is UPF0434 protein BARBAKC583_1098.